Consider the following 374-residue polypeptide: Probable dual-specificity RNA methyltransferase RlmN (374 aa).

The active-site Proton acceptor is glutamate 108. The 248-residue stretch at 114 to 361 (YSDRNTVCIS…SCTVRDTRGR (248 aa)) folds into the Radical SAM core domain. Residues cysteine 121 and cysteine 367 are joined by a disulfide bond. The [4Fe-4S] cluster site is built by cysteine 128, cysteine 132, and cysteine 135. S-adenosyl-L-methionine contacts are provided by residues 188–189 (GE), serine 222, 245–247 (SLH), and asparagine 324. The active-site S-methylcysteine intermediate is cysteine 367.

Belongs to the radical SAM superfamily. RlmN family. It depends on [4Fe-4S] cluster as a cofactor.

It localises to the cytoplasm. The catalysed reaction is adenosine(2503) in 23S rRNA + 2 reduced [2Fe-2S]-[ferredoxin] + 2 S-adenosyl-L-methionine = 2-methyladenosine(2503) in 23S rRNA + 5'-deoxyadenosine + L-methionine + 2 oxidized [2Fe-2S]-[ferredoxin] + S-adenosyl-L-homocysteine. The enzyme catalyses adenosine(37) in tRNA + 2 reduced [2Fe-2S]-[ferredoxin] + 2 S-adenosyl-L-methionine = 2-methyladenosine(37) in tRNA + 5'-deoxyadenosine + L-methionine + 2 oxidized [2Fe-2S]-[ferredoxin] + S-adenosyl-L-homocysteine. In terms of biological role, specifically methylates position 2 of adenine 2503 in 23S rRNA and position 2 of adenine 37 in tRNAs. This Mycobacterium sp. (strain JLS) protein is Probable dual-specificity RNA methyltransferase RlmN.